An 858-amino-acid polypeptide reads, in one-letter code: Selenocysteine insertion sequence-binding protein 2 (858 aa).

3 disordered regions span residues 127-261, 275-296, and 327-625; these read KPRH…GDVG, SDHTDGAVTSNATTSSPSCTQE, and LKKT…DSAT. Composition is skewed to basic and acidic residues over residues 147–166, 188–197, and 215–224; these read KPSDERRACEEQKSSSRRAD, SSLKSDGYHK, and PEFEFSRLDF. Composition is skewed to polar residues over residues 281–296 and 327–352; these read AVTSNATTSSPSCTQE and LKKTTSSADAKNVSVTSEALSSNPSY. Residues 380–387 carry the Nuclear localization signal motif; that stretch reads KNKKKKEK. Residues 418-429 are compositionally biased toward basic residues; the sequence is RRHRGQSPKLHS. Residues 430-447 are compositionally biased toward polar residues; that stretch reads KQQTQNEFKTSGKKSQVP. Residues 539 to 548 show a composition bias toward basic and acidic residues; sequence ILKERQERMQ. 2 stretches are compositionally biased toward polar residues: residues 554 to 563 and 571 to 582; these read SAVSLTVASD and GASNQTPSQDNP. Residues 678–699 are RNA-binding; it reads LVLGLREVLKHLKLRKLKCIII. The segment at 785-819 is disordered; the sequence is MRQEQAGEPGPQSPPSPPMQDPIPSTEEGTLPSTG. Positions 795-805 are enriched in pro residues; sequence PQSPPSPPMQD.

Its subcellular location is the cytoplasm. It is found in the nucleus. Functionally, mRNA-binding protein that binds to the SECIS (selenocysteine insertion sequence) element present in the 3'-UTR of mRNAs encoding selenoproteins and facilitates the incorporation of the rare amino acid selenocysteine. Insertion of selenocysteine at UGA codons is mediated by SECISBP2 and EEFSEC: SECISBP2 (1) specifically binds the SECIS sequence once the 80S ribosome encounters an in-frame UGA codon and (2) contacts the RPS27A/eS31 of the 40S ribosome before ribosome stalling. (3) GTP-bound EEFSEC then delivers selenocysteinyl-tRNA(Sec) to the 80S ribosome and adopts a preaccommodated state conformation. (4) After GTP hydrolysis, EEFSEC dissociates from the assembly, selenocysteinyl-tRNA(Sec) accommodates, and peptide bond synthesis and selenoprotein elongation occur. The chain is Selenocysteine insertion sequence-binding protein 2 from Mus musculus (Mouse).